The sequence spans 64 residues: UPF0434 protein TERTU_2813 (64 aa).

Belongs to the UPF0434 family.

In Teredinibacter turnerae (strain ATCC 39867 / T7901), this protein is UPF0434 protein TERTU_2813.